The chain runs to 499 residues: ADP,ATP carrier protein 5 (499 aa).

11 helical membrane-spanning segments follow: residues 25-45 (LGKF…QNVL), 61-81 (IAGF…VIIY), 93-113 (IFYY…FVIY), 148-168 (YIVY…LLFW), 183-203 (FYTL…FLMM), 223-243 (ITLV…CCLL), 286-306 (LWLL…VEAV), 327-347 (LYIL…NNIM), 356-376 (AVIS…LIVF), 380-400 (ILSL…VSIG), and 468-488 (LISP…IYAV).

It belongs to the ADP/ATP translocase tlc family.

The protein localises to the cell membrane. In terms of biological role, provides the rickettsial cell with host ATP in exchange for rickettsial ADP. This is an obligate exchange system. This energy acquiring activity is an important component of rickettsial parasitism. The chain is ADP,ATP carrier protein 5 (tlcE) from Rickettsia conorii (strain ATCC VR-613 / Malish 7).